The primary structure comprises 399 residues: Ribonucleoside-diphosphate reductase small chain 1 (399 aa).

A phosphoserine mark is found at Ser15, Ser24, and Ser41. Positions 145, 176, and 179 each coordinate Fe cation. The active site involves Tyr183. Fe cation-binding residues include Glu239, Glu273, and His276.

It belongs to the ribonucleoside diphosphate reductase small chain family. As to quaternary structure, heterotetramer of two large (R1) and two small (R2) subunits. S.cerevisiae has two different R1 subunits (RNR1 and RNR3) and two different R2 subunits (RNR2 and RNR4). The functional form of the small subunits is a RNR2-RNR4 heterodimer, where RNR2 provides the iron-radical center and RNR4 is required for proper folding of RNR2 and assembly with the large subunits. Under normal growth conditions, the active form of the large subunits is a homodimer of the constitutively expressed RNR1. In damaged cells or cells arrested for DNA synthesis, the reductase consists of multiple species because of the association of the small subunits (RNR2-RNR4) with either the RNR1 homodimer or a heterodimer of RNR1 and the damage-inducible RNR3. Interacts with DIF1. Fe cation is required as a cofactor.

Its subcellular location is the nucleus. It catalyses the reaction a 2'-deoxyribonucleoside 5'-diphosphate + [thioredoxin]-disulfide + H2O = a ribonucleoside 5'-diphosphate + [thioredoxin]-dithiol. Functionally, provides the precursors necessary for DNA synthesis. Catalyzes the biosynthesis of deoxyribonucleotides from the corresponding ribonucleotides. RNR2 provides the diiron-tyrosyl radical center. This chain is Ribonucleoside-diphosphate reductase small chain 1 (RNR2), found in Saccharomyces cerevisiae (strain ATCC 204508 / S288c) (Baker's yeast).